Here is a 91-residue protein sequence, read N- to C-terminus: Ragulator complex protein LAMTOR5 homolog (91 aa).

It belongs to the LAMTOR5 family. As to quaternary structure, part of the Ragulator complex.

It localises to the cytoplasm. The protein resides in the lysosome. Regulator of the TOR pathway, a signaling cascade that promotes cell growth in response to growth factors, energy levels, and amino acids. As part of the Ragulator complex, may activate the TOR signaling cascade in response to amino acids. In Nematostella vectensis (Starlet sea anemone), this protein is Ragulator complex protein LAMTOR5 homolog.